Consider the following 938-residue polypeptide: Respiratory burst oxidase homolog protein C (938 aa).

A disordered region spans residues 1–63 (MQNSENHHPH…DIGTSAGAGA (63 aa)). The Cytoplasmic portion of the chain corresponds to 1-369 (MQNSENHHPH…MYFLLDNWQR (369 aa)). The stretch at 115–141 (ASLVRNASSRIRQVSQELKRLASLNKR) forms a coiled coil. EF-hand-like regions lie at residues 185–195 (TAPTTGLLPRA) and 222–233 (RNITTDSINKAQ). 2 EF-hand domains span residues 245–280 (SFDTRLQTFFDMVDKDADGRITEEEVREIIGLSASA) and 289–324 (QSDEYAAMIMEELDPNNLGYIMIENLEMLLLQAPNQ). Positions 258, 260, 262, 264, and 269 each coordinate Ca(2+). Residues 370 to 390 (VWVLLLWIGIMAVLFTWKYIQ) form a helical membrane-spanning segment. At 391–402 (YKQKAAYDVMGP) the chain is on the extracellular side. The helical transmembrane segment at 403–423 (CVCLAKGAAETIKLNMAIILL) threads the bilayer. Positions 408 to 565 (KGAAETIKLN…LFIIVYTLLI (158 aa)) constitute a Ferric oxidoreductase domain. At 424–454 (PVCRNTITWLRNKTRLGSAVPFDDNLNFHKV) the chain is on the cytoplasmic side. Residues 455–475 (IAVAIALGVAIHGLAHLTCDF) form a helical membrane-spanning segment. Over 476–509 (PKLLNASEEAYEPMIYYFGEQPESYWWFVRGVEG) the chain is Extracellular. A helical membrane pass occupies residues 510 to 530 (VTGIIMVVLMAIAFTLATPWF). The Cytoplasmic portion of the chain corresponds to 531–545 (RRGRVSFPKPFHKLT). Residues 546–566 (GFNAFWYSHHLFIIVYTLLIV) form a helical membrane-spanning segment. Topologically, residues 567–580 (HGEKLYITKDWYKR) are extracellular. The chain crosses the membrane as a helical span at residues 581–599 (STWMYLTVPLVLYAGERLL). Residues 599 to 727 (LRAFRSSIKA…DGPYGAPAQD (129 aa)) enclose the FAD-binding FR-type domain. Residues 600–732 (RAFRSSIKAV…APAQDYKQYE (133 aa)) lie on the Cytoplasmic side of the membrane. The chain crosses the membrane as a helical span at residues 733–753 (VVLLVGLGIGATPMISIVKDI). The Extracellular segment spans residues 754-938 (VNNMKAMDEE…TKFDFHKENF (185 aa)). Residues 762-796 (EEENSLENGNGMSNAAQNASPNMAQKRGKSSSASG) form a disordered region. Residues 767-784 (LENGNGMSNAAQNASPNM) show a composition bias toward polar residues.

Belongs to the RBOH (TC 5.B.1.3) family. In terms of assembly, monomer and homodimer. Phosphorylated by CPK. In terms of tissue distribution, expressed in leaves.

The protein localises to the membrane. Calcium-dependent NADPH oxidase that generates superoxide. May be responsible for the oxidative burst in response to pathogen attack in the leaves. In Solanum tuberosum (Potato), this protein is Respiratory burst oxidase homolog protein C (RBOHC).